The sequence spans 396 residues: Acetate kinase (396 aa).

Asn-7 contacts Mg(2+). Lys-14 contributes to the ATP binding site. Residue Arg-88 participates in substrate binding. Asp-145 serves as the catalytic Proton donor/acceptor. ATP-binding positions include 205-209 (HLGNG), 279-281 (DFR), and 327-331 (GIGEN). Position 381 (Glu-381) interacts with Mg(2+).

This sequence belongs to the acetokinase family. In terms of assembly, homodimer. The cofactor is Mg(2+). It depends on Mn(2+) as a cofactor.

It is found in the cytoplasm. It catalyses the reaction acetate + ATP = acetyl phosphate + ADP. It functions in the pathway metabolic intermediate biosynthesis; acetyl-CoA biosynthesis; acetyl-CoA from acetate: step 1/2. Its function is as follows. Catalyzes the formation of acetyl phosphate from acetate and ATP. Can also catalyze the reverse reaction. The protein is Acetate kinase of Campylobacter jejuni subsp. doylei (strain ATCC BAA-1458 / RM4099 / 269.97).